Consider the following 469-residue polypeptide: L-seryl-tRNA(Sec) selenium transferase (469 aa).

An N6-(pyridoxal phosphate)lysine modification is found at Lys-298.

This sequence belongs to the SelA family. It depends on pyridoxal 5'-phosphate as a cofactor.

Its subcellular location is the cytoplasm. The enzyme catalyses L-seryl-tRNA(Sec) + selenophosphate + H(+) = L-selenocysteinyl-tRNA(Sec) + phosphate. The protein operates within aminoacyl-tRNA biosynthesis; selenocysteinyl-tRNA(Sec) biosynthesis; selenocysteinyl-tRNA(Sec) from L-seryl-tRNA(Sec) (bacterial route): step 1/1. Its function is as follows. Converts seryl-tRNA(Sec) to selenocysteinyl-tRNA(Sec) required for selenoprotein biosynthesis. The protein is L-seryl-tRNA(Sec) selenium transferase of Nitratidesulfovibrio vulgaris (strain ATCC 29579 / DSM 644 / CCUG 34227 / NCIMB 8303 / VKM B-1760 / Hildenborough) (Desulfovibrio vulgaris).